We begin with the raw amino-acid sequence, 577 residues long: MKKRVAGWYRRMKIKDKLFVFLSLIMAVSFLFVYSGVQYAFHVYDEQIYRKSSEVLRMSSERIEDELKKIEDVSYEIITDEQIQRILSMQNRDDTYDQYQMKQELWDQLAGYASDEKYIDSIHVIDARGSEYSAGSSSSDLLQQEQEEVFKRAKAKSGRNLWMTLGGSDPVLISARQIRSYHQLSLNGLGMVLIQVNVKQMIRDVPKDWGDSVGDIMIADQGGNLVYTAHASAHVPEAAKETLKHPGYDLIKKNGKRYFISYLQSSYQNWSYYNVIPFDQMFAKISFMKTVIGTCFLLFFCVVLLFGRKIANSITEPIEQLVTAMKSVQHSGIEAGVSLSLPEHTQDEAGMLNRHFTVMMKRINELMEENVEKQLIIKETELKALQAQINPHFLYNTLESINWLAKANQQKQISKMVESLGFLLRNSIHMKKDIVTIQEEADIVRHYMTIQRFRFEERLKFTLDIDDEVKHCLIPKLTLQPLAENAIQYALEPFTRPCAIRIQAKKAKGCVCITVEDNGPGMDGRILESTGGRGIGLWNIRERISLTFGEPYGLRIHSEHEKGTRIVITIPCRNEVV.

At 1-17 (MKKRVAGWYRRMKIKDK) the chain is on the cytoplasmic side. Residues 18 to 38 (LFVFLSLIMAVSFLFVYSGVQ) form a helical membrane-spanning segment. The Extracellular segment spans residues 39–286 (YAFHVYDEQI…PFDQMFAKIS (248 aa)). The chain crosses the membrane as a helical span at residues 287-307 (FMKTVIGTCFLLFFCVVLLFG). The Cytoplasmic segment spans residues 308–577 (RKIANSITEP…ITIPCRNEVV (270 aa)). The 57-residue stretch at 312-368 (NSITEPIEQLVTAMKSVQHSGIEAGVSLSLPEHTQDEAGMLNRHFTVMMKRINELME) folds into the HAMP domain. A Histidine kinase domain is found at 365-574 (ELMEENVEKQ…RIVITIPCRN (210 aa)). Residue His392 is modified to Phosphohistidine; by autocatalysis.

The protein localises to the cell membrane. The enzyme catalyses ATP + protein L-histidine = ADP + protein N-phospho-L-histidine.. Its function is as follows. Member of the two-component regulatory system YesM/YesN. Probably activates YesN by phosphorylation. This chain is Sensor histidine kinase YesM (yesM), found in Bacillus subtilis (strain 168).